The chain runs to 300 residues: ATP-dependent (S)-NAD(P)H-hydrate dehydratase (300 aa).

Residues 14–293 enclose the YjeF C-terminal domain; the sequence is LLTLFKTIVP…NEISAVFRSD (280 aa). Residues G114 and 167-173 each bind (6S)-NADPHX; that span reads NAMEFRR. Residues 198 to 202 and 219 to 228 each bind ATP; these read KGVND and GSGRRCGGQG. D229 is a (6S)-NADPHX binding site.

The protein belongs to the NnrD/CARKD family. Requires Mg(2+) as cofactor.

The catalysed reaction is (6S)-NADHX + ATP = ADP + phosphate + NADH + H(+). The enzyme catalyses (6S)-NADPHX + ATP = ADP + phosphate + NADPH + H(+). Catalyzes the dehydration of the S-form of NAD(P)HX at the expense of ATP, which is converted to ADP. Together with NAD(P)HX epimerase, which catalyzes the epimerization of the S- and R-forms, the enzyme allows the repair of both epimers of NAD(P)HX, a damaged form of NAD(P)H that is a result of enzymatic or heat-dependent hydration. The chain is ATP-dependent (S)-NAD(P)H-hydrate dehydratase from Drosophila pseudoobscura pseudoobscura (Fruit fly).